We begin with the raw amino-acid sequence, 489 residues long: Glycogen synthase (489 aa).

Position 20 (arginine 20) interacts with ADP-alpha-D-glucose.

It belongs to the glycosyltransferase 1 family. Bacterial/plant glycogen synthase subfamily.

It carries out the reaction [(1-&gt;4)-alpha-D-glucosyl](n) + ADP-alpha-D-glucose = [(1-&gt;4)-alpha-D-glucosyl](n+1) + ADP + H(+). It participates in glycan biosynthesis; glycogen biosynthesis. Functionally, synthesizes alpha-1,4-glucan chains using ADP-glucose. This Pelodictyon phaeoclathratiforme (strain DSM 5477 / BU-1) protein is Glycogen synthase.